Reading from the N-terminus, the 96-residue chain is Cell division topological specificity factor (96 aa).

The protein belongs to the MinE family.

In terms of biological role, prevents the cell division inhibition by proteins MinC and MinD at internal division sites while permitting inhibition at polar sites. This ensures cell division at the proper site by restricting the formation of a division septum at the midpoint of the long axis of the cell. This chain is Cell division topological specificity factor, found in Nitrosococcus oceani (strain ATCC 19707 / BCRC 17464 / JCM 30415 / NCIMB 11848 / C-107).